Consider the following 225-residue polypeptide: Probable manganese catalase (225 aa).

Residue E37 coordinates Mn(2+). Ca(2+) contacts are provided by D58 and D62. The Mn(2+) site is built by E67, H70, E138, and H171. Position 204 (S204) interacts with Ca(2+). The interval 204-225 (STPGRYVQDPNPTEPSFSNPRR) is disordered. Residues 213–225 (PNPTEPSFSNPRR) are compositionally biased toward polar residues.

This sequence belongs to the manganese catalase family. Ca(2+) is required as a cofactor. Mn(2+) serves as cofactor.

The catalysed reaction is 2 H2O2 = O2 + 2 H2O. Its function is as follows. Catalyzes the decomposition of hydrogen peroxide into water and oxygen. The sequence is that of Probable manganese catalase from Clostridium acetobutylicum (strain ATCC 824 / DSM 792 / JCM 1419 / IAM 19013 / LMG 5710 / NBRC 13948 / NRRL B-527 / VKM B-1787 / 2291 / W).